A 63-amino-acid chain; its full sequence is Small ribosomal subunit protein bS21 (63 aa).

This sequence belongs to the bacterial ribosomal protein bS21 family.

The chain is Small ribosomal subunit protein bS21 from Porphyromonas gingivalis (strain ATCC 33277 / DSM 20709 / CIP 103683 / JCM 12257 / NCTC 11834 / 2561).